The sequence spans 398 residues: 1-deoxy-D-xylulose 5-phosphate reductoisomerase (398 aa).

NADPH-binding residues include T10, G11, S12, I13, N38, and N124. K125 serves as a coordination point for 1-deoxy-D-xylulose 5-phosphate. E126 contributes to the NADPH binding site. D150 is a Mn(2+) binding site. Residues S151, E152, S186, and H209 each coordinate 1-deoxy-D-xylulose 5-phosphate. E152 provides a ligand contact to Mn(2+). G215 contributes to the NADPH binding site. 1-deoxy-D-xylulose 5-phosphate-binding residues include S222, N227, K228, and E231. E231 is a binding site for Mn(2+).

Belongs to the DXR family. Mg(2+) is required as a cofactor. It depends on Mn(2+) as a cofactor.

It catalyses the reaction 2-C-methyl-D-erythritol 4-phosphate + NADP(+) = 1-deoxy-D-xylulose 5-phosphate + NADPH + H(+). It participates in isoprenoid biosynthesis; isopentenyl diphosphate biosynthesis via DXP pathway; isopentenyl diphosphate from 1-deoxy-D-xylulose 5-phosphate: step 1/6. In terms of biological role, catalyzes the NADPH-dependent rearrangement and reduction of 1-deoxy-D-xylulose-5-phosphate (DXP) to 2-C-methyl-D-erythritol 4-phosphate (MEP). The polypeptide is 1-deoxy-D-xylulose 5-phosphate reductoisomerase (Baumannia cicadellinicola subsp. Homalodisca coagulata).